Consider the following 361-residue polypeptide: Holliday junction branch migration complex subunit RuvB (361 aa).

The span at Met1–Glu12 shows a compositional bias: acidic residues. Positions Met1 to Arg21 are disordered. The interval Pro13 to Tyr199 is large ATPase domain (RuvB-L). ATP is bound by residues Leu38, Arg39, Gly80, Lys83, Thr84, Thr85, Glu146–Phe148, Arg189, Tyr199, and Arg236. Position 84 (Thr84) interacts with Mg(2+). Residues Ala200–Glu270 are small ATPAse domain (RuvB-S). The segment at Ala273–Ala361 is head domain (RuvB-H). 3 residues coordinate DNA: Arg309, Arg328, and Arg333.

It belongs to the RuvB family. As to quaternary structure, homohexamer. Forms an RuvA(8)-RuvB(12)-Holliday junction (HJ) complex. HJ DNA is sandwiched between 2 RuvA tetramers; dsDNA enters through RuvA and exits via RuvB. An RuvB hexamer assembles on each DNA strand where it exits the tetramer. Each RuvB hexamer is contacted by two RuvA subunits (via domain III) on 2 adjacent RuvB subunits; this complex drives branch migration. In the full resolvosome a probable DNA-RuvA(4)-RuvB(12)-RuvC(2) complex forms which resolves the HJ.

It is found in the cytoplasm. It carries out the reaction ATP + H2O = ADP + phosphate + H(+). Its function is as follows. The RuvA-RuvB-RuvC complex processes Holliday junction (HJ) DNA during genetic recombination and DNA repair, while the RuvA-RuvB complex plays an important role in the rescue of blocked DNA replication forks via replication fork reversal (RFR). RuvA specifically binds to HJ cruciform DNA, conferring on it an open structure. The RuvB hexamer acts as an ATP-dependent pump, pulling dsDNA into and through the RuvAB complex. RuvB forms 2 homohexamers on either side of HJ DNA bound by 1 or 2 RuvA tetramers; 4 subunits per hexamer contact DNA at a time. Coordinated motions by a converter formed by DNA-disengaged RuvB subunits stimulates ATP hydrolysis and nucleotide exchange. Immobilization of the converter enables RuvB to convert the ATP-contained energy into a lever motion, pulling 2 nucleotides of DNA out of the RuvA tetramer per ATP hydrolyzed, thus driving DNA branch migration. The RuvB motors rotate together with the DNA substrate, which together with the progressing nucleotide cycle form the mechanistic basis for DNA recombination by continuous HJ branch migration. Branch migration allows RuvC to scan DNA until it finds its consensus sequence, where it cleaves and resolves cruciform DNA. The protein is Holliday junction branch migration complex subunit RuvB of Streptomyces griseus subsp. griseus (strain JCM 4626 / CBS 651.72 / NBRC 13350 / KCC S-0626 / ISP 5235).